Consider the following 323-residue polypeptide: MSKFLLYWFVYGVVCSAAYDILKAPNYFEEFVRQYNKQYDSEYEKLRRYKIFQHNLNDIITKNRNDTAVYKINKFSDLSKDETIAKYTGLSLPLHTQNFCEVVVLDRPPGKGPLEFDWRRFNKITSVKNQGMCGACWAFATLASLESQFAIAHDRLINLSEQQMIDCDSVDVGCEGGLLHTAFEAIISMGGVQIENDYPYESSNNYCRMDPTKFVVGVKQCNRYITIYEEKLKDVLRLAGPIPVAIDASDILNYEQGIIKYCANNGLNHAVLLVGYGVENNVPYWILKNSWGTDWGEQGFFKIQQNVNACGIKNELASTAEIN.

The signal sequence occupies residues 1 to 18; the sequence is MSKFLLYWFVYGVVCSAA. The propeptide at 19–112 is activation peptide; the sequence is YDILKAPNYF…VVLDRPPGKG (94 aa). 3 disulfides stabilise this stretch: cysteine 133–cysteine 174, cysteine 167–cysteine 207, and cysteine 262–cysteine 310. The active site involves cysteine 136. N-linked (GlcNAc...) asparagine; by host glycosylation is present at asparagine 158. Residues histidine 269 and asparagine 289 contribute to the active site.

The protein belongs to the peptidase C1 family. In terms of processing, synthesized as an inactive proenzyme and activated by proteolytic removal of the inhibitory propeptide.

It carries out the reaction Endopeptidase of broad specificity, hydrolyzing substrates of both cathepsin L and cathepsin B.. Its function is as follows. Cysteine protease that plays an essential role in host liquefaction to facilitate horizontal transmission of the virus. May participate in the degradation of foreign protein expressed by the baculovirus system. In Lepidoptera (butterflies and moths), this protein is Viral cathepsin (VCATH).